We begin with the raw amino-acid sequence, 88 residues long: Small ribosomal subunit protein uS15 (88 aa).

Belongs to the universal ribosomal protein uS15 family. As to quaternary structure, part of the 30S ribosomal subunit. Forms a bridge to the 50S subunit in the 70S ribosome, contacting the 23S rRNA.

In terms of biological role, one of the primary rRNA binding proteins, it binds directly to 16S rRNA where it helps nucleate assembly of the platform of the 30S subunit by binding and bridging several RNA helices of the 16S rRNA. Forms an intersubunit bridge (bridge B4) with the 23S rRNA of the 50S subunit in the ribosome. This chain is Small ribosomal subunit protein uS15, found in Psychrobacter cryohalolentis (strain ATCC BAA-1226 / DSM 17306 / VKM B-2378 / K5).